The chain runs to 217 residues: High frequency lysogenization protein HflD homolog (217 aa).

Belongs to the HflD family.

It localises to the cytoplasm. Its subcellular location is the cell membrane. The polypeptide is High frequency lysogenization protein HflD homolog (Buchnera aphidicola subsp. Baizongia pistaciae (strain Bp)).